The primary structure comprises 347 residues: UPF0284 protein M1425_0030 (347 aa).

It belongs to the UPF0284 family.

This is UPF0284 protein M1425_0030 from Saccharolobus islandicus (strain M.14.25 / Kamchatka #1) (Sulfolobus islandicus).